Consider the following 204-residue polypeptide: Ras-related protein RabL (204 aa).

Residue 14 to 21 (GDSNVGKT) coordinates GTP. Residues 36–44 (RPPSIGPDY) carry the Effector region motif. GTP contacts are provided by residues 62-66 (DTCGQ) and 120-123 (TKSD). Residues C203 and C204 are each lipidated (S-geranylgeranyl cysteine).

Belongs to the small GTPase superfamily. Rab family.

Its subcellular location is the cell membrane. This chain is Ras-related protein RabL (rabL), found in Dictyostelium discoideum (Social amoeba).